A 960-amino-acid polypeptide reads, in one-letter code: MAAYGVNFESANSIKSRKESKREERERVIQKAKEKFEKEERRKAERKARGEDTWMLPDVDLRLQQIGEEHTVKTKKAKKEKKAKKSKKEKKKKAKKEKKDEGDASCDSSEDSEDEWVEATLPSGGKDKSLEGEPEATPSSSSASNNQRDEWMTFDFLAMKTTSVADRRAQKEAEKEAERQKAQAIEQAGLHRLELNPYWKDGGSGLPPEESSSTAVKKAGVVNDGGVSWLRKSYQRMKEQADREQRSLDSVVAERYGSMEEFQKRLKEAEDAAYGERRDDEKERGRREEGKESWRRNDREEGRERWRRDEEKDRWRRNDRDEGRERWRREDGDEEKERWRKDGWRRGENEDRRRERSPNAERERARSRDDLSSKFLKPSEDEEVSRGAGFKKGSSSNQSAAFRKPVDDVEMSREAGFKKGSSSNQNAAFRKPVDDEMSRGTAFKKGSSSNQSAAFRKPVDGDHDDDEMSRGAEFRKSSSSNQSAAFRKPIDNNNDGRGVAAAWRKSSAVQDSETPTLQKHTEKSAALQEDSKTTTTVSSSESEEEEEEELILTDEEMNKLGAKIVKAEIMGNTALLEKLRAQMEAARRAKEKRAQIKDQSKRASKPAVSEKEVLLFRTDPSGRAWPVNAPSETLEPRGGRRKRKAIETHQDGERVRYFDDDDGVDLREMVRREKMSSAEDQNALYSRMAAKMMGRTDGDNYTLDDMFVSSAAQKERAGRDEERQRNKAVQETRRLAGRMEKCPHCFDSAELPKHLIIAVGTKVYLCLPNSVSLTEGHCLIVPVQHHTAATGLDEDIWGEIQMFRRALVRMFESQELDCVFLETHMNPKRHLHMVYECVPMPRELGDMAPIYFKKAIMESDEEWAMNKKVVDLSKRDIRQAVPRGLPYFSVDFGLQGGFAHVIENEQKFPHYFGKEILGGMLDLEPRRWRKPIRENFDDQRKKVLKFAQWWKPFDCTKSDS.

Disordered stretches follow at residues 1-222 (MAAY…AGVV), 261-552 (EFQK…ELIL), 624-648 (AWPV…AIET), and 712-731 (AQKE…AVQE). The stretch at 13 to 101 (SIKSRKESKR…KKAKKEKKDE (89 aa)) forms a coiled coil. The span at 16-52 (SRKESKREERERVIQKAKEKFEKEERRKAERKARGED) shows a compositional bias: basic and acidic residues. The span at 73 to 96 (KTKKAKKEKKAKKSKKEKKKKAKK) shows a compositional bias: basic residues. Residues 108–117 (SSEDSEDEWV) show a composition bias toward acidic residues. Low complexity predominate over residues 135 to 146 (EATPSSSSASNN). Residues 163 to 279 (SVADRRAQKE…EDAAYGERRD (117 aa)) are a coiled coil. 3 stretches are compositionally biased toward basic and acidic residues: residues 165-181 (ADRR…ERQK), 261-372 (EFQK…DDLS), and 404-417 (KPVD…EAGF). Positions 507–518 (SAVQDSETPTLQ) are enriched in polar residues. Residues 540 to 605 (SESEEEEEEE…IKDQSKRASK (66 aa)) adopt a coiled-coil conformation. Residues 541 to 552 (ESEEEEEEELIL) show a composition bias toward acidic residues. The segment covering 713 to 731 (QKERAGRDEERQRNKAVQE) has biased composition (basic and acidic residues).

This sequence belongs to the CWF19 family.

The chain is CWF19-like protein 2 (cwf19l2) from Danio rerio (Zebrafish).